The chain runs to 189 residues: Elongation factor P (189 aa).

Belongs to the elongation factor P family.

The protein resides in the cytoplasm. It functions in the pathway protein biosynthesis; polypeptide chain elongation. Its function is as follows. Involved in peptide bond synthesis. Stimulates efficient translation and peptide-bond synthesis on native or reconstituted 70S ribosomes in vitro. Probably functions indirectly by altering the affinity of the ribosome for aminoacyl-tRNA, thus increasing their reactivity as acceptors for peptidyl transferase. This Pseudomonas syringae pv. syringae (strain B728a) protein is Elongation factor P.